The sequence spans 161 residues: Phosphopantetheine adenylyltransferase (161 aa).

Position 10 (threonine 10) interacts with substrate. Residues 10–11 (TF) and histidine 18 contribute to the ATP site. Lysine 42, methionine 74, and arginine 88 together coordinate substrate. ATP-binding positions include 89-91 (GLR), glutamate 99, and 124-130 (WSFISSS).

This sequence belongs to the bacterial CoaD family. As to quaternary structure, homohexamer. Mg(2+) serves as cofactor.

The protein resides in the cytoplasm. It carries out the reaction (R)-4'-phosphopantetheine + ATP + H(+) = 3'-dephospho-CoA + diphosphate. The protein operates within cofactor biosynthesis; coenzyme A biosynthesis; CoA from (R)-pantothenate: step 4/5. In terms of biological role, reversibly transfers an adenylyl group from ATP to 4'-phosphopantetheine, yielding dephospho-CoA (dPCoA) and pyrophosphate. The sequence is that of Phosphopantetheine adenylyltransferase from Serratia proteamaculans (strain 568).